A 174-amino-acid polypeptide reads, in one-letter code: UPF0316 protein LMHCC_0787 (174 aa).

The next 3 membrane-spanning stretches (helical) occupy residues 4-24, 36-56, and 62-82; these read GIFI…IYTV, LAAL…SLVL, and IANV…GMKI.

Belongs to the UPF0316 family.

The protein resides in the cell membrane. The polypeptide is UPF0316 protein LMHCC_0787 (Listeria monocytogenes serotype 4a (strain HCC23)).